The sequence spans 358 residues: tRNA-specific 2-thiouridylase MnmA (358 aa).

Residues 6-13 (LVSGGVDS) and I32 each bind ATP. Residues 93-95 (NPD) form an interaction with target base in tRNA region. Catalysis depends on C98, which acts as the Nucleophile. A disulfide bridge connects residues C98 and C193. Position 121 (G121) interacts with ATP. Positions 143–145 (KDQ) are interaction with tRNA. C193 serves as the catalytic Cysteine persulfide intermediate.

Belongs to the MnmA/TRMU family.

It localises to the cytoplasm. The catalysed reaction is S-sulfanyl-L-cysteinyl-[protein] + uridine(34) in tRNA + AH2 + ATP = 2-thiouridine(34) in tRNA + L-cysteinyl-[protein] + A + AMP + diphosphate + H(+). Functionally, catalyzes the 2-thiolation of uridine at the wobble position (U34) of tRNA, leading to the formation of s(2)U34. This is tRNA-specific 2-thiouridylase MnmA from Parabacteroides distasonis (strain ATCC 8503 / DSM 20701 / CIP 104284 / JCM 5825 / NCTC 11152).